A 1040-amino-acid chain; its full sequence is Chromatin modification-related protein rik1 (1040 aa).

Belongs to the DDB1 family. As to quaternary structure, component of the Clr4 methyltransferase complex (ClrC) composed of at least clr4, rik1, pcu4, rbx1, raf1 and raf2. The cullin pcu4, rik1, raf1, raf2 and the ring-box protein rbx1 are components of an E3 ubiquitin ligase, whose activity is essential for heterochromatin assembly.

Its subcellular location is the nucleus. The protein localises to the cytoplasm. It is found in the cytoskeleton. It localises to the microtubule organizing center. The protein resides in the spindle pole body. Its subcellular location is the chromosome. Its function is as follows. Component of the Clr4 methyltransferase complex (ClrC) which contributes to the establishment of heterochromatin by specifically methylating histone H3 to form H3K9me. ClrC preferentially ubiquitylates H3K14 and ClrC-mediated H3 ubiquitination promotes clr4 methyltransferase activity for the methylation of H3K9. H3K9me represents a specific tag for epigenetic transcriptional repression by recruiting swi6/HP1 to methylated histones which leads to transcriptional silencing within centromeric heterochromatin, telomeric regions and at the silent mating-type loci. Rik1 is involved in the RNAi-mediated targeting of ClrC to heterochromatic repeat elements. Rik1 also has a function in meiotic telomere clustering. This chain is Chromatin modification-related protein rik1 (rik1), found in Schizosaccharomyces pombe (strain 972 / ATCC 24843) (Fission yeast).